A 394-amino-acid polypeptide reads, in one-letter code: Lipid-A-disaccharide synthase (394 aa).

The protein belongs to the LpxB family.

It catalyses the reaction a lipid X + a UDP-2-N,3-O-bis[(3R)-3-hydroxyacyl]-alpha-D-glucosamine = a lipid A disaccharide + UDP + H(+). Its pathway is bacterial outer membrane biogenesis; LPS lipid A biosynthesis. In terms of biological role, condensation of UDP-2,3-diacylglucosamine and 2,3-diacylglucosamine-1-phosphate to form lipid A disaccharide, a precursor of lipid A, a phosphorylated glycolipid that anchors the lipopolysaccharide to the outer membrane of the cell. The sequence is that of Lipid-A-disaccharide synthase (lpxB) from Synechocystis sp. (strain ATCC 27184 / PCC 6803 / Kazusa).